A 130-amino-acid chain; its full sequence is Small ribosomal subunit protein eS6 (130 aa).

Belongs to the eukaryotic ribosomal protein eS6 family.

This is Small ribosomal subunit protein eS6 from Methanosphaera stadtmanae (strain ATCC 43021 / DSM 3091 / JCM 11832 / MCB-3).